The following is a 249-amino-acid chain: 2,3-bisphosphoglycerate-dependent phosphoglycerate mutase (249 aa).

Substrate contacts are provided by residues 8–15 (RHGQSVWN), 21–22 (TG), Arg60, 87–90 (ERHY), Lys98, 114–115 (RR), and 183–184 (GN). The active-site Tele-phosphohistidine intermediate is the His9. Glu87 acts as the Proton donor/acceptor in catalysis.

The protein belongs to the phosphoglycerate mutase family. BPG-dependent PGAM subfamily. As to quaternary structure, homodimer.

The catalysed reaction is (2R)-2-phosphoglycerate = (2R)-3-phosphoglycerate. It functions in the pathway carbohydrate degradation; glycolysis; pyruvate from D-glyceraldehyde 3-phosphate: step 3/5. Catalyzes the interconversion of 2-phosphoglycerate and 3-phosphoglycerate. The sequence is that of 2,3-bisphosphoglycerate-dependent phosphoglycerate mutase from Solidesulfovibrio magneticus (strain ATCC 700980 / DSM 13731 / RS-1) (Desulfovibrio magneticus).